Reading from the N-terminus, the 307-residue chain is Phosphate import ATP-binding protein PstB (307 aa).

The tract at residues 1–30 (MSETTYTTTEDTDDTNSTDSMVGTTTGETD) is disordered. Residues 48-302 (LGVDDLDVYY…PQSERVEDYI (255 aa)) enclose the ABC transporter domain. 80-87 (GPSGCGKS) is a binding site for ATP.

This sequence belongs to the ABC transporter superfamily. Phosphate importer (TC 3.A.1.7) family. The complex is composed of two ATP-binding proteins (PstB), two transmembrane proteins (PstC and PstA) and a solute-binding protein (PstS).

The protein resides in the cell membrane. The catalysed reaction is phosphate(out) + ATP + H2O = ADP + 2 phosphate(in) + H(+). Functionally, part of the ABC transporter complex PstSACB involved in phosphate import. Responsible for energy coupling to the transport system. This chain is Phosphate import ATP-binding protein PstB, found in Haloquadratum walsbyi (strain DSM 16790 / HBSQ001).